Reading from the N-terminus, the 131-residue chain is Large ribosomal subunit protein bL17 (131 aa).

This sequence belongs to the bacterial ribosomal protein bL17 family. In terms of assembly, part of the 50S ribosomal subunit. Contacts protein L32.

The chain is Large ribosomal subunit protein bL17 from Polynucleobacter necessarius subsp. necessarius (strain STIR1).